The following is a 293-amino-acid chain: Foldase protein PrsA 2 (293 aa).

The first 20 residues, 1-20, serve as a signal peptide directing secretion; sequence MKKKLILGLVMMMALFSLAA. Cys-21 carries the N-palmitoyl cysteine lipid modification. The S-diacylglycerol cysteine moiety is linked to residue Cys-21. The region spanning 135–226 is the PpiC domain; sequence QPDITVSHIL…YGYHIIQMDK (92 aa).

This sequence belongs to the PrsA family.

It localises to the cell membrane. It catalyses the reaction [protein]-peptidylproline (omega=180) = [protein]-peptidylproline (omega=0). Functionally, plays a major role in protein secretion by helping the post-translocational extracellular folding of several secreted proteins. The chain is Foldase protein PrsA 2 (prsA2) from Listeria monocytogenes serovar 1/2a (strain ATCC BAA-679 / EGD-e).